We begin with the raw amino-acid sequence, 473 residues long: PPE family protein PPE37 (473 aa).

Residues aspartate 203–glutamate 206 carry the Iron-binding motif motif. 2 helical membrane passes run valine 227–valine 247 and proline 250–leucine 270.

The protein belongs to the mycobacterial PPE family.

Its subcellular location is the cell membrane. Essential for efficient heme-iron acquisition (HIA). Binds iron. Strains with a functional PPE37 can utilize low concentrations of hemin very efficiently in broth and on agar plates. During infection, might interfere with the pro-inflammatory cytokine response in infected macrophages. Its function is as follows. In vitro, incubation of the protein in the presence of M.tuberculosis proteases leads to the cleavage of PPE37 into two segments, the N- and C-terminal segments. Transfection of human monocytic THP-1 cell lines with the N-terminal segment leads to the proliferation and differentiation of THP-1 cells into adherent stellate cells with dendritic cell-like morphology. Transfection of THP-1 cells with the C-terminal segment leads to the apoptosis of the cells. Recombinant protein antigens display strong B-cell response in tuberculosis patients and immunized mice. This Mycobacterium tuberculosis (strain ATCC 25618 / H37Rv) protein is PPE family protein PPE37.